The following is a 260-amino-acid chain: MLAVLLFAALVATAYSQEYGPAKPDVKIIPHPKTVVHEDARHVHRQVHLVKQVPVHRTRVQTIINEVPRIIRKPKQIRKTRVFRQYYPVDVPVLRKVTVVKPVHLERKVPVPRMVVKDVPHHVVRTKKVDVPIDVPIKKIVEKKVVRYVENKIFRPRPVVQEKVRVEHVPQPFPVDQVVVKKNPRPRLIVEKKPVPVIRHIHTHKKQAVAVPRVKTVAEVVPNVVHQKVTYPVGKGGGSVQIPGGPLPVPEHYKYKGYDK.

Positions 1–16 are cleaved as a signal peptide; sequence MLAVLLFAALVATAYS.

As to expression, prismatic layer of shell (at protein level). Expressed primarily in the mantle with highest level in the mantle edge and lower level in the mantle pallium.

It is found in the secreted. The chain is Mantle protein from Pinctada maxima (Silver-lipped pearl oyster).